Reading from the N-terminus, the 197-residue chain is Small ribosomal subunit protein uS4B (197 aa).

One can recognise an S4 RNA-binding domain in the interval 88–153 (CRLDNMVYRM…IEKYLSNLKN (66 aa)).

It belongs to the universal ribosomal protein uS4 family. In terms of assembly, part of the 30S ribosomal subunit. Contacts protein S5. The interaction surface between S4 and S5 is involved in control of translational fidelity.

Its function is as follows. One of the primary rRNA binding proteins, it binds directly to 16S rRNA where it nucleates assembly of the body of the 30S subunit. In terms of biological role, with S5 and S12 plays an important role in translational accuracy. This Alkaliphilus oremlandii (strain OhILAs) (Clostridium oremlandii (strain OhILAs)) protein is Small ribosomal subunit protein uS4B.